The following is a 596-amino-acid chain: Zinc finger E-box-binding homeobox protein zag-1 (596 aa).

The segment at 24 to 46 adopts a C2H2-type 1 zinc-finger fold; it reads FKCPECTKAFKFKHHLKEHIRIH. Residues 52-72 form a C2H2-type 2; degenerate zinc finger; sequence FECQQCHKRFSHSGSYSSHMS. Over residues 133-145 the composition is skewed to polar residues; the sequence is LENGTSPTPTQEP. Disordered stretches follow at residues 133-225, 324-369, and 395-421; these read LENG…RPLR, NNSL…EPEW, and GFVTNQEDEEEKPIKAEESPVSSGSSS. Basic and acidic residues predominate over residues 165–179; it reads SEVKTEVKTEVKTED. Residues 188-200 show a composition bias toward polar residues; the sequence is PAVSMSLSPAPEQ. The span at 201-216 shows a compositional bias: low complexity; the sequence is NGNESMNNGGSGSDGK. A DNA-binding region (homeobox) is located at residues 223–282; the sequence is PLRSRSFLNDSQVAVLQNHFKRNPFPSKYELSAVAEQIGVNKRVVQVWFQNTRAKERRSN. Residues 331 to 355 show a composition bias toward basic and acidic residues; it reads QDERNNENTDEVMDHDGLKDGKETP. 2 consecutive C2H2-type zinc fingers follow at residues 481 to 503 and 509 to 531; these read FSCDQCDKVFGKQSSLARHKYEH and YKCDICEKAFKHKHHLTEHKRLH. A C2H2-type 5; degenerate zinc finger spans residues 537-560; the sequence is FQCDKCLKRFSHSGSYSQHMNHRY. A disordered region spans residues 569 to 596; the sequence is QPASPSDVLNGGSVTVSPSSSNTPPPST. Low complexity predominate over residues 578–590; the sequence is NGGSVTVSPSSSN.

Expressed in the six touch receptor neurons (TRNs) but not in the FLP and PVD neurons. Expressed in the M4 cholinergic motor neuron.

It localises to the nucleus. Transcription factor. Down-regulates expression of genes involved in either the synthesis or reuptake of serotonin, dopamine and GABA. Acts as a transcriptional repressor to regulate multiple, discrete, neuron-specific aspects of terminal differentiation, including cell migration, axonal development and gene expression. Promotes touch receptor neuron differentiation by repressing the expression of egl-44 and egl-46. As egl-44 and egl-46, probably acting as a heterodimer, repress expression of zag-1 in FLP neurons, together these proteins form a bistable, negative-feedback loop that regulates the choice between neuronal fates. Required for axon guidance. Involved in the proper development of the pharynx. Required for pharynx isthmus peristalsis, probably via a role in the differentiation of the M4 cholinergic motor neuron. Directly represses its own transcription by interacting with conserved E-box sequence motifs 5'-CACCTG-3' in its own promoter. May also act as a transcriptional activator of the homeodomain ceh-28. This Caenorhabditis elegans protein is Zinc finger E-box-binding homeobox protein zag-1.